Consider the following 202-residue polypeptide: LexA repressor (202 aa).

A DNA-binding region (H-T-H motif) is located at residues 27 to 47 (RAEIAAELGFRSANAAEEHLR). Residues S119 and K156 each act as for autocatalytic cleavage activity in the active site.

It belongs to the peptidase S24 family. As to quaternary structure, homodimer.

The catalysed reaction is Hydrolysis of Ala-|-Gly bond in repressor LexA.. In terms of biological role, represses a number of genes involved in the response to DNA damage (SOS response), including recA and lexA. In the presence of single-stranded DNA, RecA interacts with LexA causing an autocatalytic cleavage which disrupts the DNA-binding part of LexA, leading to derepression of the SOS regulon and eventually DNA repair. This chain is LexA repressor, found in Marinobacter nauticus (strain ATCC 700491 / DSM 11845 / VT8) (Marinobacter aquaeolei).